The primary structure comprises 91 residues: CRISPR-associated endoribonuclease Cas2 2 (91 aa).

Asp10 is a binding site for Mg(2+).

It belongs to the CRISPR-associated endoribonuclease Cas2 protein family. In terms of assembly, homodimer, forms a heterotetramer with a Cas1 homodimer. It depends on Mg(2+) as a cofactor.

Its function is as follows. CRISPR (clustered regularly interspaced short palindromic repeat), is an adaptive immune system that provides protection against mobile genetic elements (viruses, transposable elements and conjugative plasmids). CRISPR clusters contain sequences complementary to antecedent mobile elements and target invading nucleic acids. CRISPR clusters are transcribed and processed into CRISPR RNA (crRNA). Functions as a ssRNA-specific endoribonuclease. Involved in the integration of spacer DNA into the CRISPR cassette. This is CRISPR-associated endoribonuclease Cas2 2 from Thermodesulfovibrio yellowstonii (strain ATCC 51303 / DSM 11347 / YP87).